Consider the following 340-residue polypeptide: L-threonine 3-dehydrogenase (340 aa).

Cys38 is a binding site for Zn(2+). Residues Thr40 and His43 each act as charge relay system in the active site. The Zn(2+) site is built by His63, Glu64, Cys93, Cys96, Cys99, and Cys107. NAD(+) is bound by residues Ile175, Asp195, Arg200, 262 to 264 (LGI), and 286 to 287 (IY).

It belongs to the zinc-containing alcohol dehydrogenase family. Homotetramer. It depends on Zn(2+) as a cofactor.

It is found in the cytoplasm. It catalyses the reaction L-threonine + NAD(+) = (2S)-2-amino-3-oxobutanoate + NADH + H(+). It functions in the pathway amino-acid degradation; L-threonine degradation via oxydo-reductase pathway; glycine from L-threonine: step 1/2. Its function is as follows. Catalyzes the NAD(+)-dependent oxidation of L-threonine to 2-amino-3-ketobutyrate. In Legionella pneumophila subsp. pneumophila (strain Philadelphia 1 / ATCC 33152 / DSM 7513), this protein is L-threonine 3-dehydrogenase.